Reading from the N-terminus, the 99-residue chain is NADH dehydrogenase [ubiquinone] 1 alpha subcomplex subunit 2 (99 aa).

An N-acetylalanine modification is found at Ala2. An intrachain disulfide couples Cys24 to Cys58. Position 64 is an N6-acetyllysine; alternate (Lys64). Lys64 is modified (N6-succinyllysine; alternate). Residue Lys75 is modified to N6-acetyllysine.

This sequence belongs to the complex I NDUFA2 subunit family. In terms of assembly, complex I is composed of 45 different subunits.

The protein localises to the mitochondrion inner membrane. In terms of biological role, accessory subunit of the mitochondrial membrane respiratory chain NADH dehydrogenase (Complex I), that is believed not to be involved in catalysis. Complex I functions in the transfer of electrons from NADH to the respiratory chain. The immediate electron acceptor for the enzyme is believed to be ubiquinone. In Bos taurus (Bovine), this protein is NADH dehydrogenase [ubiquinone] 1 alpha subcomplex subunit 2 (NDUFA2).